The primary structure comprises 1236 residues: Chitinase-like protein PB1E7.04c (1236 aa).

Residues 1 to 19 (MRLISSLLLLVYSARLALS) form the signal peptide. Asparagine 21, asparagine 24, asparagine 54, asparagine 123, asparagine 225, asparagine 237, asparagine 255, asparagine 267, asparagine 277, asparagine 288, and asparagine 309 each carry an N-linked (GlcNAc...) asparagine glycan. The GH18 domain maps to 26 to 325 (TAVLGYWGSN…EAIHKILDTK (300 aa)). Disordered regions lie at residues 326-367 (SKHS…TSSA), 449-497 (VSSI…QSTL), and 584-625 (TSSP…STIL). The segment covering 339–351 (QGLESTSSIALNP) has biased composition (polar residues). Residues 352-367 (TSSISSTSSSSSTSSA) show a composition bias toward low complexity. 5 N-linked (GlcNAc...) asparagine glycosylation sites follow: asparagine 715, asparagine 737, asparagine 768, asparagine 786, and asparagine 813. Disordered stretches follow at residues 804–836 (ISTS…LAAN), 868–927 (TTAL…TSSS), 946–979 (TPTS…SSIA), and 1125–1159 (AASG…TPSN). The span at 810–821 (NEYNTSFHAPTV) shows a compositional bias: polar residues. The segment covering 822 to 832 (SSTTSSSSTTS) has biased composition (low complexity). The span at 1125-1156 (AASGSSTVTSSATASSSSSAATTADSSVTTDT) shows a compositional bias: low complexity.

This sequence belongs to the glycosyl hydrolase 18 family. Chitinase class III subfamily.

The protein localises to the secreted. This chain is Chitinase-like protein PB1E7.04c, found in Schizosaccharomyces pombe (strain 972 / ATCC 24843) (Fission yeast).